The primary structure comprises 175 residues: uncharacterized protein (175 aa).

Belongs to the asfivirus B175L family.

This is an uncharacterized protein from African swine fever virus (strain Badajoz 1971 Vero-adapted) (Ba71V).